A 109-amino-acid chain; its full sequence is Nucleoid-associated protein Sbal223_1770 (109 aa).

Belongs to the YbaB/EbfC family. In terms of assembly, homodimer.

It localises to the cytoplasm. It is found in the nucleoid. Functionally, binds to DNA and alters its conformation. May be involved in regulation of gene expression, nucleoid organization and DNA protection. In Shewanella baltica (strain OS223), this protein is Nucleoid-associated protein Sbal223_1770.